Here is a 520-residue protein sequence, read N- to C-terminus: Catalase easC (520 aa).

The active site involves histidine 71. Tyrosine 361 is a heme binding site.

This sequence belongs to the catalase family. Requires heme as cofactor.

The protein operates within alkaloid biosynthesis; ergot alkaloid biosynthesis. Its function is as follows. Catalase; part of the gene cluster that mediates the biosynthesis of fumiclavanine C, a fungal ergot alkaloid. DmaW catalyzes the first step of ergot alkaloid biosynthesis by condensing dimethylallyl diphosphate (DMAP) and tryptophan to form 4-dimethylallyl-L-tryptophan. The second step is catalyzed by the methyltransferase easF that methylates 4-dimethylallyl-L-tryptophan in the presence of S-adenosyl-L-methionine, resulting in the formation of 4-dimethylallyl-L-abrine. The catalase easC and the FAD-dependent oxidoreductase easE then transform 4-dimethylallyl-L-abrine to chanoclavine-I which is further oxidized by EasD in the presence of NAD(+), resulting in the formation of chanoclavine-I aldehyde. EasA reduces chanoclavine-I aldehyde to dihydrochanoclavine-I aldehyde that spontaneously dehydrates to form 6,8-dimethyl-6,7-didehydroergoline. EasG then catalyzes the reduction of 6,8-dimethyl-6,7-didehydroergoline to form festuclavine. Hydrolysis of festuclavine by easM then leads to the formation of fumigaclavine B which is in turn acetylated by easN to fumigaclavine A. Finally, easL catalyzes the conversion of fumigaclavine A into fumigaclavine C by attaching a dimethylallyl moiety to C-2 of the indole nucleus. The chain is Catalase easC from Aspergillus fumigatus (strain ATCC MYA-4609 / CBS 101355 / FGSC A1100 / Af293) (Neosartorya fumigata).